We begin with the raw amino-acid sequence, 380 residues long: Cytochrome b (380 aa).

The next 4 helical transmembrane spans lie at 34 to 54, 78 to 99, 114 to 134, and 179 to 199; these read FGSLLALCLMTQILTGLLLAM, WLIRNMHANGASFFFICIYMHI, WNTGILLLLTLMATAFVGYVL, and FFALHFLLPFMIAGLTLIHLT. Residues H84 and H98 each coordinate heme b. Residues H183 and H197 each coordinate heme b. H202 serves as a coordination point for a ubiquinone. A run of 4 helical transmembrane segments spans residues 227-247, 289-309, 321-341, and 348-368; these read LKDILGLTLLLLPLTTMALFS, LGGVLALAASVLVLFLSPLLH, LSQLLFWTLVANLLILTWIGS, and FIIIGQLASTTYFIILLILFP.

Belongs to the cytochrome b family. As to quaternary structure, the cytochrome bc1 complex contains 11 subunits: 3 respiratory subunits (MT-CYB, CYC1 and UQCRFS1), 2 core proteins (UQCRC1 and UQCRC2) and 6 low-molecular weight proteins (UQCRH/QCR6, UQCRB/QCR7, UQCRQ/QCR8, UQCR10/QCR9, UQCR11/QCR10 and a cleavage product of UQCRFS1). This cytochrome bc1 complex then forms a dimer. Requires heme b as cofactor.

The protein resides in the mitochondrion inner membrane. Component of the ubiquinol-cytochrome c reductase complex (complex III or cytochrome b-c1 complex) that is part of the mitochondrial respiratory chain. The b-c1 complex mediates electron transfer from ubiquinol to cytochrome c. Contributes to the generation of a proton gradient across the mitochondrial membrane that is then used for ATP synthesis. In Hydrobates pelagicus (European storm-petrel), this protein is Cytochrome b (MT-CYB).